Consider the following 434-residue polypeptide: Serine hydroxymethyltransferase (434 aa).

(6S)-5,6,7,8-tetrahydrofolate-binding positions include L132 and 136–138 (GHL). N6-(pyridoxal phosphate)lysine is present on K241.

The protein belongs to the SHMT family. Homodimer. Pyridoxal 5'-phosphate serves as cofactor.

Its subcellular location is the cytoplasm. It carries out the reaction (6R)-5,10-methylene-5,6,7,8-tetrahydrofolate + glycine + H2O = (6S)-5,6,7,8-tetrahydrofolate + L-serine. It participates in one-carbon metabolism; tetrahydrofolate interconversion. It functions in the pathway amino-acid biosynthesis; glycine biosynthesis; glycine from L-serine: step 1/1. Catalyzes the reversible interconversion of serine and glycine with tetrahydrofolate (THF) serving as the one-carbon carrier. This reaction serves as the major source of one-carbon groups required for the biosynthesis of purines, thymidylate, methionine, and other important biomolecules. Also exhibits THF-independent aldolase activity toward beta-hydroxyamino acids, producing glycine and aldehydes, via a retro-aldol mechanism. The sequence is that of Serine hydroxymethyltransferase from Nitrobacter hamburgensis (strain DSM 10229 / NCIMB 13809 / X14).